We begin with the raw amino-acid sequence, 201 residues long: Twin horsetail protein 2 (201 aa).

The protein localises to the nucleus. In terms of biological role, required for correct meiotic chromosome segregation and recombination. In Schizosaccharomyces pombe (strain 972 / ATCC 24843) (Fission yeast), this protein is Twin horsetail protein 2 (tht2).